Reading from the N-terminus, the 443-residue chain is Amino-acid acetyltransferase (443 aa).

Residues 296 to 443 (EQIRRATIND…RSKVLMADLG (148 aa)) enclose the N-acetyltransferase domain.

This sequence belongs to the acetyltransferase family. ArgA subfamily. As to quaternary structure, homohexamer.

The protein resides in the cytoplasm. The catalysed reaction is L-glutamate + acetyl-CoA = N-acetyl-L-glutamate + CoA + H(+). Its pathway is amino-acid biosynthesis; L-arginine biosynthesis; N(2)-acetyl-L-ornithine from L-glutamate: step 1/4. This is Amino-acid acetyltransferase (argA) from Salmonella typhimurium (strain LT2 / SGSC1412 / ATCC 700720).